The sequence spans 540 residues: CTP synthase (540 aa).

The amidoligase domain stretch occupies residues 1-265 (MVRFIFITGG…DNKVLKFFNL (265 aa)). A CTP-binding site is contributed by Ser13. Residue Ser13 participates in UTP binding. ATP-binding positions include 14–19 (SLGKGL) and Asp71. Asp71 and Glu139 together coordinate Mg(2+). CTP contacts are provided by residues 146-148 (DIE), 186-191 (KTKPTQ), and Lys222. Residues 186–191 (KTKPTQ) and Lys222 each bind UTP. The Glutamine amidotransferase type-1 domain occupies 290–539 (RIAIIAKYHK…VEAAIKYNKN (250 aa)). Gly352 contacts L-glutamine. Cys379 acts as the Nucleophile; for glutamine hydrolysis in catalysis. L-glutamine-binding positions include 380 to 383 (LGMQ), Glu403, and Arg467. Residues His512 and Glu514 contribute to the active site.

It belongs to the CTP synthase family. In terms of assembly, homotetramer.

It carries out the reaction UTP + L-glutamine + ATP + H2O = CTP + L-glutamate + ADP + phosphate + 2 H(+). The catalysed reaction is L-glutamine + H2O = L-glutamate + NH4(+). It catalyses the reaction UTP + NH4(+) + ATP = CTP + ADP + phosphate + 2 H(+). It functions in the pathway pyrimidine metabolism; CTP biosynthesis via de novo pathway; CTP from UDP: step 2/2. Its activity is regulated as follows. Allosterically activated by GTP, when glutamine is the substrate; GTP has no effect on the reaction when ammonia is the substrate. The allosteric effector GTP functions by stabilizing the protein conformation that binds the tetrahedral intermediate(s) formed during glutamine hydrolysis. Inhibited by the product CTP, via allosteric rather than competitive inhibition. Functionally, catalyzes the ATP-dependent amination of UTP to CTP with either L-glutamine or ammonia as the source of nitrogen. Regulates intracellular CTP levels through interactions with the four ribonucleotide triphosphates. This chain is CTP synthase, found in Rickettsia bellii (strain RML369-C).